The chain runs to 153 residues: MADTLMSDTPFWQRKTLDEMTDAEWESLCDGCGQCCLHKLMDEDTDEIYFTNVACRQLKIKTCQCRHYERRFEFEPDCIKLTRENLPDFEWLPMTCAYRLLAEGKPLPTWHPLLTGSKAAMHGERISVRHIAVKESEVRDWQDHILNKPSWAE.

The protein belongs to the UPF0260 family.

The polypeptide is UPF0260 protein YcgN (Salmonella paratyphi B (strain ATCC BAA-1250 / SPB7)).